The chain runs to 283 residues: Phosphatidylglycerol--prolipoprotein diacylglyceryl transferase (283 aa).

Helical transmembrane passes span 21 to 41 (IEVHWYGLAYACAIVIAFYMA), 62 to 82 (YFLWAELGIVLGARIGYILIY), 106 to 126 (FIGIRGMSYHGGLVGFLIASY), 136 to 156 (LLIYLDLIAISLPLGYVFGRI), 190 to 210 (PSQLIEAFLEGVIVFLMVMWA), 218 to 238 (GLLIVVYGLGYSLMRFIAEFY), and 252 to 272 (LSMGQILSLFMVIVSLGILLY). Position 155 (Arg155) interacts with a 1,2-diacyl-sn-glycero-3-phospho-(1'-sn-glycerol).

The protein belongs to the Lgt family.

It is found in the cell inner membrane. The enzyme catalyses L-cysteinyl-[prolipoprotein] + a 1,2-diacyl-sn-glycero-3-phospho-(1'-sn-glycerol) = an S-1,2-diacyl-sn-glyceryl-L-cysteinyl-[prolipoprotein] + sn-glycerol 1-phosphate + H(+). It participates in protein modification; lipoprotein biosynthesis (diacylglyceryl transfer). Functionally, catalyzes the transfer of the diacylglyceryl group from phosphatidylglycerol to the sulfhydryl group of the N-terminal cysteine of a prolipoprotein, the first step in the formation of mature lipoproteins. The chain is Phosphatidylglycerol--prolipoprotein diacylglyceryl transferase from Helicobacter acinonychis (strain Sheeba).